Reading from the N-terminus, the 274-residue chain is NAD(P)H dehydrogenase [quinone] 1 (274 aa).

FAD contacts are provided by residues H12, 18-19 (FN), and Q67. Residue S82 is modified to Phosphoserine. 104 to 107 (LQWF) provides a ligand contact to FAD. 126-128 (AYT) contributes to the substrate binding site. FAD is bound by residues 148–151 (TTGG), Y156, and R201. Residues 225 to 274 (PSSLFDLNFQAGFLMKKEVQDEEKNKKFGLSVGHHLGKSIPTDNQIKARK) are important for apoenzyme conformational stability. Glycyl lysine isopeptide (Lys-Gly) (interchain with G-Cter in SUMO2) cross-links involve residues K250 and K251.

This sequence belongs to the NAD(P)H dehydrogenase (quinone) family. Homodimer. Interacts with PDLIM4 isoform 2; this interaction stabilizes PDLIM4 isoform 2 in response to oxidative stress and protects it from ubiquitin-independent degradation by the core 20S proteasome. Interacts with TP73 (via SAM domain); this interaction is NADH-dependent, stabilizes TP73 in response to oxidative stress and protects it from ubiquitin-independent degradation by the 20S proteasome. Interacts with TP53; this interaction is NADH-dependent, stabilizes TP53 in response to oxidative stress and protects it from ubiquitin-independent degradation by the 20S proteasome. It depends on FAD as a cofactor.

The protein localises to the cytoplasm. Its subcellular location is the cytosol. The catalysed reaction is a quinone + NADH + H(+) = a quinol + NAD(+). The enzyme catalyses a quinone + NADPH + H(+) = a quinol + NADP(+). It catalyses the reaction ubiquinone-10 + NADH + H(+) = ubiquinol-10 + NAD(+). It carries out the reaction menadione + NADH + H(+) = menadiol + NAD(+). Functionally, flavin-containing quinone reductase that catalyzes two-electron reduction of quinones to hydroquinones using either NADH or NADPH as electron donors. In a ping-pong kinetic mechanism, the electrons are sequentially transferred from NAD(P)H to flavin cofactor and then from reduced flavin to the quinone, bypassing the formation of semiquinone and reactive oxygen species. Regulates cellular redox state primarily through quinone detoxification. Reduces components of plasma membrane redox system such as coenzyme Q and vitamin quinones, producing antioxidant hydroquinone forms. In the process may function as superoxide scavenger to prevent hydroquinone oxidation and facilitate excretion. Alternatively, can activate quinones and their derivatives by generating redox reactive hydroquinones with DNA cross-linking antitumor potential. Acts as a gatekeeper of the core 20S proteasome known to degrade proteins with unstructured regions. Upon oxidative stress, interacts with tumor suppressors TP53 and TP73 in a NADH-dependent way and inhibits their ubiquitin-independent degradation by the 20S proteasome. In Pongo abelii (Sumatran orangutan), this protein is NAD(P)H dehydrogenase [quinone] 1 (NQO1).